Here is a 389-residue protein sequence, read N- to C-terminus: Tryptophan synthase beta chain 1 (389 aa).

At K84 the chain carries N6-(pyridoxal phosphate)lysine.

The protein belongs to the TrpB family. As to quaternary structure, tetramer of two alpha and two beta chains. Pyridoxal 5'-phosphate is required as a cofactor.

The protein resides in the plastid. It is found in the chloroplast. The enzyme catalyses (1S,2R)-1-C-(indol-3-yl)glycerol 3-phosphate + L-serine = D-glyceraldehyde 3-phosphate + L-tryptophan + H2O. It participates in amino-acid biosynthesis; L-tryptophan biosynthesis; L-tryptophan from chorismate: step 5/5. Its function is as follows. The beta subunit is responsible for the synthesis of L-tryptophan from indole and L-serine. The sequence is that of Tryptophan synthase beta chain 1 (TSB1) from Zea mays (Maize).